Here is a 362-residue protein sequence, read N- to C-terminus: UPF0324 membrane protein YPO1307/y2878/YP_1285 (362 aa).

The next 9 helical transmembrane spans lie at 21 to 38 (YIPGLVLTGVITGLALNV), 48 to 70 (GLGALTLAILFGIIVGNTLYPWL), 102 to 124 (VADVGATGMVIDLLTLSSTFILA), 139 to 161 (VMLIGAGSSICGAAAIMATEPVL), 168 to 190 (VAVAVATVVIFGTLAIFVYPWLY), 240 to 257 (MIRVMMLAPFLLLLSAYL), 278 to 300 (WFAVIFILMAGFNSLNLLPAVWV), 305 to 327 (TLDTILLAMAMAALGLTTHIGSI), and 334 to 356 (PLLLALLLFIWLLVGGTGINLFV).

This sequence belongs to the UPF0324 family.

The protein localises to the cell membrane. The chain is UPF0324 membrane protein YPO1307/y2878/YP_1285 from Yersinia pestis.